We begin with the raw amino-acid sequence, 409 residues long: Tyrosine--tRNA ligase (409 aa).

Residue Tyr-39 coordinates L-tyrosine. The 'HIGH' region motif lies at 44–53 (PTAPSLHVGS). Positions 176 and 180 each coordinate L-tyrosine. The 'KMSKS' region motif lies at 236–240 (KMGKT). Position 239 (Lys-239) interacts with ATP. An S4 RNA-binding domain is found at 346–409 (IGIVDALVGL…KKKHGILRKA (64 aa)).

The protein belongs to the class-I aminoacyl-tRNA synthetase family. TyrS type 1 subfamily. Homodimer.

It is found in the cytoplasm. The catalysed reaction is tRNA(Tyr) + L-tyrosine + ATP = L-tyrosyl-tRNA(Tyr) + AMP + diphosphate + H(+). In terms of biological role, catalyzes the attachment of tyrosine to tRNA(Tyr) in a two-step reaction: tyrosine is first activated by ATP to form Tyr-AMP and then transferred to the acceptor end of tRNA(Tyr). The polypeptide is Tyrosine--tRNA ligase (Novosphingobium aromaticivorans (strain ATCC 700278 / DSM 12444 / CCUG 56034 / CIP 105152 / NBRC 16084 / F199)).